The primary structure comprises 166 residues: MFKKLFGKGKEVQKDIAIYAPLTGEYVKIEDIPDPVFAQKMMGEGFGINPTEGEVVSPIAGRVDNVFPTKHAIGLKADNGLELLVHIGLDTVQLDGEGFEVLVSSGDEVNVGDPLVRFNLEFINNNAKSVISPIIITNTDQAASINIYDENAVIKGETKVIDVTMN.

Residues 34–138 (DPVFAQKMMG…SVISPIIITN (105 aa)) enclose the PTS EIIA type-1 domain. His-71 and His-86 together coordinate Zn(2+). The active-site Tele-phosphohistidine intermediate; for EIIA activity is the His-86. Residue His-86 is modified to Phosphohistidine; by HPr.

In terms of assembly, heterodimer with glycerol kinase (glpk). The cofactor is Zn(2+).

The protein localises to the cytoplasm. In terms of biological role, the phosphoenolpyruvate-dependent sugar phosphotransferase system (sugar PTS), a major carbohydrate active transport system, catalyzes the phosphorylation of incoming sugar substrates concomitantly with their translocation across the cell membrane. The enzyme II complex composed of PtsG and Crr is involved in glucose transport. In Staphylococcus aureus (strain Mu50 / ATCC 700699), this protein is PTS system glucose-specific EIIA component (crr).